The following is a 207-amino-acid chain: Histidine biosynthesis bifunctional protein HisIE (207 aa).

The phosphoribosyl-AMP cyclohydrolase stretch occupies residues Met1–Phe117. The interval Leu118–Ala207 is phosphoribosyl-ATP pyrophosphohydrolase.

It in the N-terminal section; belongs to the PRA-CH family. The protein in the C-terminal section; belongs to the PRA-PH family.

It localises to the cytoplasm. The enzyme catalyses 1-(5-phospho-beta-D-ribosyl)-ATP + H2O = 1-(5-phospho-beta-D-ribosyl)-5'-AMP + diphosphate + H(+). It catalyses the reaction 1-(5-phospho-beta-D-ribosyl)-5'-AMP + H2O = 1-(5-phospho-beta-D-ribosyl)-5-[(5-phospho-beta-D-ribosylamino)methylideneamino]imidazole-4-carboxamide. Its pathway is amino-acid biosynthesis; L-histidine biosynthesis; L-histidine from 5-phospho-alpha-D-ribose 1-diphosphate: step 2/9. The protein operates within amino-acid biosynthesis; L-histidine biosynthesis; L-histidine from 5-phospho-alpha-D-ribose 1-diphosphate: step 3/9. This chain is Histidine biosynthesis bifunctional protein HisIE (hisI), found in Campylobacter jejuni subsp. jejuni serotype O:2 (strain ATCC 700819 / NCTC 11168).